The primary structure comprises 43 residues: GKLTDSQEDYIRHVWDDVNRKLITAKALERVNLVAEALSSNYH.

In terms of assembly, possible monomer. In terms of tissue distribution, expressed in mucus-secreting tissues.

Its subcellular location is the secreted. Its function is as follows. Shows antimicrobial activity against M.luteus (MIC=4 uM) and E.coli (MIC=12 uM), as well as against the yeast C.tropicalis (MIC=4 uM). Shows a pro-inflammatory effect, since the topical application of the protein induces an increase of cellular recruitment characterized by an increase in the number of leukocyte rolling. Does not show hemolytic activity on human erythrocytes (at doses up to 100 uM). The polypeptide is Antimicrobial protein PcfHb (Potamotrygon cf. henlei (Freshwater stingray)).